We begin with the raw amino-acid sequence, 133 residues long: uncharacterized protein (133 aa).

2 consecutive transmembrane segments (helical) span residues 8 to 28 and 46 to 66; these read MVLL…LLLL and SFSI…SIGA.

Its subcellular location is the membrane. This is an uncharacterized protein from Saccharomyces cerevisiae (strain ATCC 204508 / S288c) (Baker's yeast).